The primary structure comprises 843 residues: Protein P (843 aa).

The interval 1-177 is terminal protein domain (TP); it reads MPLSYQHFRK…FCGSPYSWEQ (177 aa). A spacer region spans residues 178 to 346; the sequence is ELQHGRLVFQ…YCLSHLINLH (169 aa). Disordered regions lie at residues 218–243 and 291–315; these read LKQS…SGSI and TAQR…AGSQ. Positions 347–690 are polymerase/reverse transcriptase domain (RT); sequence EDWGPCIEHG…YLNLYPVARQ (344 aa). In terms of domain architecture, Reverse transcriptase spans 357–600; it reads EHNIRIPRTP…YSLNFMGYVI (244 aa). The Mg(2+) site is built by Asp-429, Asp-551, and Asp-552.

This sequence belongs to the hepadnaviridae P protein family.

It catalyses the reaction DNA(n) + a 2'-deoxyribonucleoside 5'-triphosphate = DNA(n+1) + diphosphate. The catalysed reaction is Endonucleolytic cleavage to 5'-phosphomonoester.. Activated by host HSP70 and HSP40 in vitro to be able to bind the epsilon loop of the pgRNA. Because deletion of the RNase H region renders the protein partly chaperone-independent, the chaperones may be needed indirectly to relieve occlusion of the RNA-binding site by this domain. Inhibited by several reverse-transcriptase inhibitors: Lamivudine, Adefovir and Entecavir. Functionally, multifunctional enzyme that converts the viral RNA genome into dsDNA in viral cytoplasmic capsids. This enzyme displays a DNA polymerase activity that can copy either DNA or RNA templates, and a ribonuclease H (RNase H) activity that cleaves the RNA strand of RNA-DNA heteroduplexes in a partially processive 3'- to 5'-endonucleasic mode. Neo-synthesized pregenomic RNA (pgRNA) are encapsidated together with the P protein, and reverse-transcribed inside the nucleocapsid. Initiation of reverse-transcription occurs first by binding the epsilon loop on the pgRNA genome, and is initiated by protein priming, thereby the 5'-end of (-)DNA is covalently linked to P protein. Partial (+)DNA is synthesized from the (-)DNA template and generates the relaxed circular DNA (RC-DNA) genome. After budding and infection, the RC-DNA migrates in the nucleus, and is converted into a plasmid-like covalently closed circular DNA (cccDNA). The activity of P protein does not seem to be necessary for cccDNA generation, and is presumably released from (+)DNA by host nuclear DNA repair machinery. The sequence is that of Protein P from Hepatitis B virus genotype C subtype ayw (isolate Australia/AustRC/1992) (HBV-C).